Here is a 374-residue protein sequence, read N- to C-terminus: Organelle RRM domain-containing protein 1, chloroplastic (374 aa).

A chloroplast-targeting transit peptide spans 1-54 (MEALIASTSFFVPISNSSSSHIINNRFFPSFYSPNLNFGTFRKTSLSSSHLVFS). Residues 258 to 271 (KDYEGDSTQDSRDQ) are compositionally biased toward basic and acidic residues. The disordered stretch occupies residues 258–279 (KDYEGDSTQDSRDQDDSESPPV). Residues 282-360 (KKLFITGLSF…WMIVVDVAKT (79 aa)) form the RRM domain.

Interacts with PCMP-H51/CRR28 and PCMP-H12/OTP82. Interacts with MORF8/RIP1, MORF2/RIP2 and VAR3/OZ1.

The protein resides in the plastid. It is found in the chloroplast. Its function is as follows. Involved in C-to-U editing of chloroplastic RNA. Functions as major chloroplastic editing factor. Controls 62 percent of the chloroplastic editing sites. Binds RNA close to ORRM1-dependent editing sites in vitro. Binds the editing recognition trans-factors PCMP-H51/CRR28 and PCMP-H12/OTP82. The polypeptide is Organelle RRM domain-containing protein 1, chloroplastic (Arabidopsis thaliana (Mouse-ear cress)).